The primary structure comprises 294 residues: Lipoyl synthase (294 aa).

[4Fe-4S] cluster-binding residues include Cys38, Cys43, Cys49, Cys64, Cys68, Cys71, and Ser277. In terms of domain architecture, Radical SAM core spans 50–266 (WSRGTATFLL…RSFAEGAGFR (217 aa)).

This sequence belongs to the radical SAM superfamily. Lipoyl synthase family. [4Fe-4S] cluster is required as a cofactor.

It is found in the cytoplasm. The catalysed reaction is [[Fe-S] cluster scaffold protein carrying a second [4Fe-4S](2+) cluster] + N(6)-octanoyl-L-lysyl-[protein] + 2 oxidized [2Fe-2S]-[ferredoxin] + 2 S-adenosyl-L-methionine + 4 H(+) = [[Fe-S] cluster scaffold protein] + N(6)-[(R)-dihydrolipoyl]-L-lysyl-[protein] + 4 Fe(3+) + 2 hydrogen sulfide + 2 5'-deoxyadenosine + 2 L-methionine + 2 reduced [2Fe-2S]-[ferredoxin]. It functions in the pathway protein modification; protein lipoylation via endogenous pathway; protein N(6)-(lipoyl)lysine from octanoyl-[acyl-carrier-protein]: step 2/2. Functionally, catalyzes the radical-mediated insertion of two sulfur atoms into the C-6 and C-8 positions of the octanoyl moiety bound to the lipoyl domains of lipoate-dependent enzymes, thereby converting the octanoylated domains into lipoylated derivatives. In Pelodictyon phaeoclathratiforme (strain DSM 5477 / BU-1), this protein is Lipoyl synthase.